The chain runs to 54 residues: UPF0391 membrane protein TERTU_3637 (54 aa).

The next 2 helical transmembrane spans lie at 4-24 (WALV…TGLA) and 29-49 (SIAW…LVAG).

The protein belongs to the UPF0391 family.

It localises to the cell membrane. This chain is UPF0391 membrane protein TERTU_3637, found in Teredinibacter turnerae (strain ATCC 39867 / T7901).